A 345-amino-acid chain; its full sequence is tRNA N6-adenosine threonylcarbamoyltransferase (345 aa).

Positions 111 and 115 each coordinate Fe cation. Substrate is bound by residues 134 to 138 (LVSGG), Asp-167, Gly-180, Asp-184, and Asn-278. Residue Asp-306 coordinates Fe cation.

This sequence belongs to the KAE1 / TsaD family. Fe(2+) is required as a cofactor.

The protein resides in the cytoplasm. It carries out the reaction L-threonylcarbamoyladenylate + adenosine(37) in tRNA = N(6)-L-threonylcarbamoyladenosine(37) in tRNA + AMP + H(+). Required for the formation of a threonylcarbamoyl group on adenosine at position 37 (t(6)A37) in tRNAs that read codons beginning with adenine. Is involved in the transfer of the threonylcarbamoyl moiety of threonylcarbamoyl-AMP (TC-AMP) to the N6 group of A37, together with TsaE and TsaB. TsaD likely plays a direct catalytic role in this reaction. The polypeptide is tRNA N6-adenosine threonylcarbamoyltransferase (Cyanothece sp. (strain PCC 7425 / ATCC 29141)).